The sequence spans 250 residues: Probable fimbrial chaperone YfcS (250 aa).

A signal peptide spans Met1 to Ala28.

It belongs to the periplasmic pilus chaperone family.

It localises to the periplasm. In terms of biological role, part of the yfcOPQRSUV fimbrial operon. Could contribute to adhesion to various surfaces in specific environmental niches. Increases adhesion to eukaryotic T24 bladder epithelial cells in the absence of fim genes. The protein is Probable fimbrial chaperone YfcS (yfcS) of Escherichia coli (strain K12).